Here is a 189-residue protein sequence, read N- to C-terminus: Autophagy receptor ATG45 (189 aa).

A binds glycogen region spans residues 1–96 (MSNFLLVIPE…TNNILHFKDN (96 aa)). Positions 97–189 (EASQLMDIPL…AKKVKTYWNK (93 aa)) are required for sequestration into autophagosomes. S107 is subject to Phosphoserine. The ATG8 interaction motif (AIM) motif lies at 127-130 (YVNL). Phosphoserine is present on S172. The interval 176–187 (LMCIAKKVKTYW) is may facilitate interactions with the autophagosome membrane.

Interacts with ATG8.

The protein resides in the cytoplasm. It is found in the cytosol. It localises to the cytoplasmic vesicle. The protein localises to the autophagosome. In terms of biological role, autophagy receptor for glycogen that facilitates the sequestration of glycogen assemblies into autophagosomes as part of bulk autophagy; the autophagy of glycogen (glycophagy) is stimulated during prolonged nitrogen starvation and during sporulation. This is Autophagy receptor ATG45 from Saccharomyces cerevisiae (strain ATCC 204508 / S288c) (Baker's yeast).